The sequence spans 468 residues: Mothers against decapentaplegic homolog 1 (468 aa).

M1 is subject to N-acetylmethionine. One can recognise an MH1 domain in the interval 12 to 136 (PAVKRLLGWK…YKRVESPVLP (125 aa)). C64, C109, C121, and H126 together coordinate Zn(2+). Positions 162-246 (NEPHMPLNAT…DGSQPMDTNM (85 aa)) are disordered. Residues 188-210 (PNSSYPNSPGSSSSTYPHSPTSS) are compositionally biased toward low complexity. Positions 221-232 (DTPPPAYLPPED) are enriched in pro residues. Positions 237–246 (DGSQPMDTNM) are enriched in polar residues. Positions 274–468 (WCSIVYYELN…SPHNPISSVS (195 aa)) constitute an MH2 domain. T325 carries the post-translational modification Phosphothreonine; by MINK1, TNIK and MAP4K4. Residues 421 to 431 (KGWGAEYHRQD) form an L3 loop region. A phosphoserine mark is found at S466 and S468.

This sequence belongs to the dwarfin/SMAD family. In terms of assembly, found in a complex with SMAD4 and YY1. Interacts with HGS, NANOG and ZCCHC12. Upon C-terminus phosphorylation: forms trimers with another SMAD1 and the co-SMAD SMAD4. Interacts with PEBP2-alpha subunit, CREB-binding protein (CBP), p300, SMURF1, SMURF2, USP15 and HOXC8. Associates with ZNF423 or ZNF521 in response to BMP2 leading to activate transcription of BMP target genes. Interacts with SKOR1. Interacts (via MH2 domain) with LEMD3. Binding to LEMD3 results in at least a partial reduction of receptor-mediated phosphorylation. Forms a ternary complex with PSMB4 and OAZ1 before PSMB4 is incorporated into the 20S proteasome. Interacts (via MH2 domain) with FAM83G (via MH2 domain); in a SMAD4-independent manner. Interacts with ZC3H3. Interacts with TMEM119. Interacts (via MH1 and MH2 domains) with ZNF8. Interacts with RANBP3L; the interaction increases when SMAD1 is not phosphorylated and mediates SMAD1 nuclear export. Interacts with EGR1; this interaction inhibits SMAD1 dephosphorylation. Interacts with SMAD6. Interacts with YAP1. Interacts with MTMR4; negatively regulates BMP signaling through SMAD1 dephosphorylation and retention in endosomes. Post-translationally, phosphorylation of the C-terminal SVS motif by BMP type 1 receptor kinase activates SMAD1 by promoting dissociation from the receptor and trimerization with SMAD4. Phosphorylation by ERK2 MAP kinase in response to EGF or HGF prevents SMAD1 nuclear accumulation and transcriptional activity in response to BMP. Dephosphorylation, probably by PPM1A, induces its export from the nucleus to the cytoplasm. Dephosphorylation is inhibited by association with EGR1. Phosphorylation by CDK8/9 creates binding sites for YAP1, and subsequent phosphorylation by GSK3 switches off YAP1 binding and adds binding sites for SMURF1. In terms of processing, ubiquitinated by SMAD-specific E3 ubiquitin ligase SMURF1, leading to its degradation. Monoubiquitinated, leading to prevent DNA-binding. Deubiquitination by USP15 alleviates inhibition and promotes activation of TGF-beta target genes. Dephosphorylation, probably by PPM1A, induces its export from the nucleus to the cytoplasm. Phospho-SMAD1 is ubiquitinated by CHIP leading to disruption of the SMAD1-SMAD4 complex. In terms of tissue distribution, ubiquitous; present in liver, lung, stomach and spleen with lower level in heart, testes and skeletal muscle.

Its subcellular location is the cytoplasm. The protein localises to the nucleus. In terms of biological role, transcriptional modulator that plays a role in various cellular processes, including embryonic development, cell differentiation, and tissue homeostasis. Upon BMP ligand binding to their receptors at the cell surface, is phosphorylated by activated type I BMP receptors (BMPRIs) and associates with SMAD4 to form an heteromeric complex which translocates into the nucleus acting as transcription factor. In turn, the hetero-trimeric complex recognizes cis-regulatory elements containing Smad Binding Elements (SBEs) to modulate the outcome of the signaling network. SMAD1/OAZ1/PSMB4 complex mediates the degradation of the CREBBP/EP300 repressor SNIP1. Positively regulates BMP4-induced expression of odontogenic development regulator MSX1 following IPO7-mediated nuclear import. The chain is Mothers against decapentaplegic homolog 1 (Smad1) from Rattus norvegicus (Rat).